A 177-amino-acid chain; its full sequence is ATP synthase subunit delta (177 aa).

It belongs to the ATPase delta chain family. As to quaternary structure, F-type ATPases have 2 components, F(1) - the catalytic core - and F(0) - the membrane proton channel. F(1) has five subunits: alpha(3), beta(3), gamma(1), delta(1), epsilon(1). F(0) has three main subunits: a(1), b(2) and c(10-14). The alpha and beta chains form an alternating ring which encloses part of the gamma chain. F(1) is attached to F(0) by a central stalk formed by the gamma and epsilon chains, while a peripheral stalk is formed by the delta and b chains.

Its subcellular location is the cell inner membrane. In terms of biological role, f(1)F(0) ATP synthase produces ATP from ADP in the presence of a proton or sodium gradient. F-type ATPases consist of two structural domains, F(1) containing the extramembraneous catalytic core and F(0) containing the membrane proton channel, linked together by a central stalk and a peripheral stalk. During catalysis, ATP synthesis in the catalytic domain of F(1) is coupled via a rotary mechanism of the central stalk subunits to proton translocation. Its function is as follows. This protein is part of the stalk that links CF(0) to CF(1). It either transmits conformational changes from CF(0) to CF(1) or is implicated in proton conduction. In Yersinia pseudotuberculosis serotype O:1b (strain IP 31758), this protein is ATP synthase subunit delta.